The chain runs to 38 residues: MVEALLSGIVLGLIPITLAGLFVTAYLQYRRGDQLDIR.

The chain crosses the membrane as a helical span at residues 5–25 (LLSGIVLGLIPITLAGLFVTA).

It belongs to the PetG family. As to quaternary structure, the 4 large subunits of the cytochrome b6-f complex are cytochrome b6, subunit IV (17 kDa polypeptide, PetD), cytochrome f and the Rieske protein, while the 4 small subunits are PetG, PetL, PetM and PetN. The complex functions as a dimer.

Its subcellular location is the plastid. It localises to the chloroplast thylakoid membrane. Functionally, component of the cytochrome b6-f complex, which mediates electron transfer between photosystem II (PSII) and photosystem I (PSI), cyclic electron flow around PSI, and state transitions. PetG is required for either the stability or assembly of the cytochrome b6-f complex. This is Cytochrome b6-f complex subunit 5 from Adiantum capillus-veneris (Maidenhair fern).